The sequence spans 307 residues: Nucleotide-binding protein Arth_2083 (307 aa).

30–37 serves as a coordination point for ATP; the sequence is GMSGAGRS. 81–84 is a binding site for GTP; it reads DVRS.

Belongs to the RapZ-like family.

Its function is as follows. Displays ATPase and GTPase activities. In Arthrobacter sp. (strain FB24), this protein is Nucleotide-binding protein Arth_2083.